Consider the following 109-residue polypeptide: MFGKGGMGNLMKQAQQMQERMQKLQEEIANMEVVGESGAGLVKVTITGSHSVRRVNIDESLMEDDKEMLEDLIAAAFNDAARRVEETQKEKMAAITGGMQLPPGMKMPF.

The disordered stretch occupies residues 1–22; sequence MFGKGGMGNLMKQAQQMQERMQ.

Belongs to the YbaB/EbfC family. Homodimer.

The protein localises to the cytoplasm. It is found in the nucleoid. In terms of biological role, binds to DNA and alters its conformation. May be involved in regulation of gene expression, nucleoid organization and DNA protection. The polypeptide is Nucleoid-associated protein VV2410 (Vibrio vulnificus (strain YJ016)).